A 308-amino-acid polypeptide reads, in one-letter code: Aspartate carbamoyltransferase catalytic subunit (308 aa).

Positions 59 and 60 each coordinate carbamoyl phosphate. K87 is a binding site for L-aspartate. 3 residues coordinate carbamoyl phosphate: R109, H137, and Q140. Residues R173 and R224 each contribute to the L-aspartate site. 2 residues coordinate carbamoyl phosphate: G267 and P268.

Belongs to the aspartate/ornithine carbamoyltransferase superfamily. ATCase family. Heterododecamer (2C3:3R2) of six catalytic PyrB chains organized as two trimers (C3), and six regulatory PyrI chains organized as three dimers (R2).

It carries out the reaction carbamoyl phosphate + L-aspartate = N-carbamoyl-L-aspartate + phosphate + H(+). The protein operates within pyrimidine metabolism; UMP biosynthesis via de novo pathway; (S)-dihydroorotate from bicarbonate: step 2/3. In terms of biological role, catalyzes the condensation of carbamoyl phosphate and aspartate to form carbamoyl aspartate and inorganic phosphate, the committed step in the de novo pyrimidine nucleotide biosynthesis pathway. This is Aspartate carbamoyltransferase catalytic subunit from Helicobacter acinonychis (strain Sheeba).